A 677-amino-acid polypeptide reads, in one-letter code: MTQVAKKILVTCALPYANGSIHLGHMLEHIQADVWVRYQRMRGHEVNFICADDAHGTPIMLKAQQLGITPEQMIGEMSQEHQTDFAGFNISYDNYHSTHSEENRQLSELIYSRLKENGFIKNRTISQLYDPEKGMFLPDRFVKGTCPKCKSPDQYGDNCEVCGATYSPTELIEPKSVVSGATPVMRDSEHFFFDLPSFSEMLQAWTRSGALQEQVANKMQEWFESGLQQWDISRDAPYFGFEIPNAPGKYFYVWLDAPIGYMGSFKNLCDKRGDSVSFDEYWKKDSTAELYHFIGKDIVYFHSLFWPAMLEGSNFRKPTNLFVHGYVTVNGAKMSKSRGTFIKASTWLNHFDADSLRYYYTAKLSSRIDDIDLNLEDFVQRVNADIVNKVVNLASRNAGFINKRFDGVLASELADPQLYKTFTDAAEVIGEAWESREFGKAIREIMALADLANRYVDEQAPWVVAKQEGRDADLQAICSMGINLFRVLMTYLKPVLPKLTERAEAFLNTELTWDGIQQPLLGHKVNPFKALYNRIDMKQVEALVEASKEEVKAAAAPVTGPLADDPIQETITFDDFAKVDLRVALIENAEFVEGSDKLLRLTLDLGGEKRNVFSGIRSAYPDPQALIGRHTIMVANLAPRKMRFGISEGMVMAAGPGGKDIFLLSPDAGAKPGHQVK.

Residues 15–25 (PYANGSIHLGH) carry the 'HIGH' region motif. Positions 146, 149, 159, and 162 each coordinate Zn(2+). The 'KMSKS' region motif lies at 333–337 (KMSKS). K336 is an ATP binding site. Residues 575-677 (DFAKVDLRVA…AGAKPGHQVK (103 aa)) enclose the tRNA-binding domain.

It belongs to the class-I aminoacyl-tRNA synthetase family. MetG type 1 subfamily. In terms of assembly, homodimer. Zn(2+) serves as cofactor.

Its subcellular location is the cytoplasm. The catalysed reaction is tRNA(Met) + L-methionine + ATP = L-methionyl-tRNA(Met) + AMP + diphosphate. Its function is as follows. Is required not only for elongation of protein synthesis but also for the initiation of all mRNA translation through initiator tRNA(fMet) aminoacylation. The polypeptide is Methionine--tRNA ligase (Escherichia coli O81 (strain ED1a)).